Here is a 357-residue protein sequence, read N- to C-terminus: tRNA-specific 2-thiouridylase MnmA (357 aa).

ATP contacts are provided by residues 3–10 and Leu-29; that span reads AMSGGVDS. Residue Cys-98 is the Nucleophile of the active site. A disulfide bond links Cys-98 and Cys-196. Gly-122 provides a ligand contact to ATP. Positions 146 to 148 are interaction with tRNA; it reads KDQ. The Cysteine persulfide intermediate role is filled by Cys-196. Residues 302–303 form an interaction with tRNA region; that stretch reads RY.

This sequence belongs to the MnmA/TRMU family.

The protein localises to the cytoplasm. It catalyses the reaction S-sulfanyl-L-cysteinyl-[protein] + uridine(34) in tRNA + AH2 + ATP = 2-thiouridine(34) in tRNA + L-cysteinyl-[protein] + A + AMP + diphosphate + H(+). Functionally, catalyzes the 2-thiolation of uridine at the wobble position (U34) of tRNA, leading to the formation of s(2)U34. The sequence is that of tRNA-specific 2-thiouridylase MnmA from Moorella thermoacetica (strain ATCC 39073 / JCM 9320).